We begin with the raw amino-acid sequence, 145 residues long: MRAAGTLLAFCCLVLSTTGGPSPDTCSQDLNSRVKPGFPKTIKTNDPGVLQAARYSVEKFNNCTNDMFLFKESRITRALVQIVKGLKYMLEVEIGRTTCKKNQHLRLDDCDFQTNHTLKQTLSCYSEVWVVPWLQHFEVPVLRCH.

The signal sequence occupies residues 1–19 (MRAAGTLLAFCCLVLSTTG). N62 is a glycosylation site (N-linked (GlcNAc...) asparagine). Positions 81-85 (QIVKG) match the Secondary area of contact motif. The cysteines at positions 99 and 110 are disulfide-linked. An N-linked (GlcNAc...) asparagine glycan is attached at N115. The cysteines at positions 124 and 144 are disulfide-linked.

It belongs to the cystatin family. Homodimer; disulfide-linked. Primarily expressed in peripheral blood cells and spleen.

The protein localises to the secreted. Its subcellular location is the cytoplasm. Its function is as follows. Inhibits papain and cathepsin L but with affinities lower than other cystatins. May play a role in immune regulation through inhibition of a unique target in the hematopoietic system. This is Cystatin-F (CST7) from Homo sapiens (Human).